The chain runs to 248 residues: MSPRKFFVGGNWKMNGDKKSLGELINTLNSGKMNADTEVVCGAPAIYLDFARQKLDAKIALSAQNCYKVAKGAFTGEISPAMIKDCGATWVILGHSERRHVFGECDELIGQKVAHALSEGIGVIACIGEKLDQREAGITEKVVFEQTKAIADNVKDWSKVVLAYEPVWAIGTGKTATPEQAQEVHKKLREWVKTNVSEGVAQSVRIIYGGSVTGGTCRELAGQPDIDGFLVGGASLKPEFIEIINAKH.

Residues Asn11 and Lys13 each contribute to the substrate site. Residue His95 is the Electrophile of the active site. The Proton acceptor role is filled by Glu165.

This sequence belongs to the triosephosphate isomerase family. Homodimer.

It localises to the cytoplasm. It carries out the reaction dihydroxyacetone phosphate = methylglyoxal + phosphate. It catalyses the reaction D-glyceraldehyde 3-phosphate = dihydroxyacetone phosphate. Its pathway is carbohydrate degradation; glycolysis; D-glyceraldehyde 3-phosphate from glycerone phosphate: step 1/1. It functions in the pathway carbohydrate biosynthesis; gluconeogenesis. Functionally, triosephosphate isomerase is an extremely efficient metabolic enzyme that catalyzes the interconversion between dihydroxyacetone phosphate (DHAP) and D-glyceraldehyde-3-phosphate (G3P) in glycolysis and gluconeogenesis. In terms of biological role, it is also responsible for the non-negligible production of methylglyoxal a reactive cytotoxic side-product that modifies and can alter proteins, DNA and lipids. The polypeptide is Triosephosphate isomerase (tpi1) (Xenopus laevis (African clawed frog)).